The chain runs to 300 residues: Inosose dehydratase (300 aa).

This sequence belongs to the IolE/MocC family. Glutathione serves as cofactor. The cofactor is Co(2+). Mn(2+) is required as a cofactor.

It carries out the reaction scyllo-inosose = 3D-3,5/4-trihydroxycyclohexane-1,2-dione + H2O. It functions in the pathway polyol metabolism; myo-inositol degradation into acetyl-CoA; acetyl-CoA from myo-inositol: step 2/7. Catalyzes the dehydration of inosose (2-keto-myo-inositol, 2KMI or 2,4,6/3,5-pentahydroxycyclohexanone) to 3D-(3,5/4)-trihydroxycyclohexane-1,2-dione (D-2,3-diketo-4-deoxy-epi-inositol). The chain is Inosose dehydratase from Bacillus licheniformis (strain ATCC 14580 / DSM 13 / JCM 2505 / CCUG 7422 / NBRC 12200 / NCIMB 9375 / NCTC 10341 / NRRL NRS-1264 / Gibson 46).